The following is an 884-amino-acid chain: Formin-like protein 11 (884 aa).

Positions 1–18 are cleaved as a signal peptide; sequence MVYFRQIFLMIIVVSLHC. The segment at 89-143 is disordered; the sequence is AESASFSPWPAPSPSPFPNGGPIESPAYPPAPPRPIPPHLRRPLPQRTHPLEQPE. Composition is skewed to pro residues over residues 97–107 and 115–126; these read WPAPSPSPFPN and AYPPAPPRPIPP. The chain crosses the membrane as a helical span at residues 158 to 178; the sequence is ILVPVVASTASAIGFVVCVVG. Disordered stretches follow at residues 307 to 384, 416 to 469, and 512 to 532; these read SSDD…FSNK, SFPI…APLP, and MQSS…GKHL. A compositionally biased stretch (low complexity) spans 329–343; sequence SNASSASGSVNVGSS. Residues 346 to 358 show a composition bias toward basic and acidic residues; it reads FSEHKLDIPECSR. Composition is skewed to pro residues over residues 367–379 and 425–436; these read APPP…PPLP and QPRPPPPPPPPQ. Positions 461 to 884 constitute an FH2 domain; it reads LGKDGAPLPK…NSPSPLAPFR (424 aa).

Belongs to the formin-like family. Class-I subfamily.

It is found in the membrane. Functionally, might be involved in the organization and polarity of the actin cytoskeleton. The chain is Formin-like protein 11 (FH11) from Arabidopsis thaliana (Mouse-ear cress).